A 107-amino-acid polypeptide reads, in one-letter code: uncharacterized protein (107 aa).

A disordered region spans residues 88–107 (GSTPWGSGRQVNAARPIGGR).

It localises to the virion. This is an uncharacterized protein from Acanthamoeba polyphaga (Amoeba).